Reading from the N-terminus, the 503-residue chain is Na(+)-translocating NADH-quinone reductase subunit B (503 aa).

Helical transmembrane passes span 55-75 (MMLV…NSGI), 120-140 (IFLP…VLFA), 161-181 (TLPP…GVVV), and 186-206 (FGGT…FLFF). Position 248 is an FMN phosphoryl threonine (T248). Helical transmembrane passes span 361–381 (TSTF…IASW), 387–407 (FGIG…LIAG), 417–437 (FFIP…LVFM), 452–472 (WIYG…NPAY), and 475–495 (GVML…YFAV).

It belongs to the NqrB/RnfD family. As to quaternary structure, composed of six subunits; NqrA, NqrB, NqrC, NqrD, NqrE and NqrF. Requires FMN as cofactor.

The protein localises to the cell inner membrane. It carries out the reaction a ubiquinone + n Na(+)(in) + NADH + H(+) = a ubiquinol + n Na(+)(out) + NAD(+). In terms of biological role, NQR complex catalyzes the reduction of ubiquinone-1 to ubiquinol by two successive reactions, coupled with the transport of Na(+) ions from the cytoplasm to the periplasm. NqrA to NqrE are probably involved in the second step, the conversion of ubisemiquinone to ubiquinol. This is Na(+)-translocating NADH-quinone reductase subunit B from Chlamydia abortus (strain DSM 27085 / S26/3) (Chlamydophila abortus).